Consider the following 280-residue polypeptide: Octanoyl-[GcvH]:protein N-octanoyltransferase (280 aa).

Residues 40-245 (QERGAVLRAW…VLSTVSLLQN (206 aa)) form the BPL/LPL catalytic domain. Cysteine 144 (acyl-thioester intermediate) is an active-site residue.

The protein belongs to the octanoyltransferase LipL family.

It catalyses the reaction N(6)-octanoyl-L-lysyl-[glycine-cleavage complex H protein] + L-lysyl-[lipoyl-carrier protein] = N(6)-octanoyl-L-lysyl-[lipoyl-carrier protein] + L-lysyl-[glycine-cleavage complex H protein]. It participates in protein modification; protein lipoylation via endogenous pathway; protein N(6)-(lipoyl)lysine from octanoyl-[acyl-carrier-protein]. Catalyzes the amidotransfer (transamidation) of the octanoyl moiety from octanoyl-GcvH to the lipoyl domain of the E2 subunit of lipoate-dependent enzymes. The chain is Octanoyl-[GcvH]:protein N-octanoyltransferase from Exiguobacterium sp. (strain ATCC BAA-1283 / AT1b).